The sequence spans 250 residues: 5'-nucleotidase SurE (250 aa).

Residues Asp-8, Asp-9, Ser-39, and Asn-91 each contribute to the a divalent metal cation site.

Belongs to the SurE nucleotidase family. A divalent metal cation is required as a cofactor.

The protein localises to the cytoplasm. It carries out the reaction a ribonucleoside 5'-phosphate + H2O = a ribonucleoside + phosphate. Nucleotidase that shows phosphatase activity on nucleoside 5'-monophosphates. The sequence is that of 5'-nucleotidase SurE from Leptospira interrogans serogroup Icterohaemorrhagiae serovar copenhageni (strain Fiocruz L1-130).